A 149-amino-acid chain; its full sequence is Arginine repressor (149 aa).

This sequence belongs to the ArgR family.

It localises to the cytoplasm. The protein operates within amino-acid biosynthesis; L-arginine biosynthesis [regulation]. In terms of biological role, regulates arginine biosynthesis genes. The polypeptide is Arginine repressor (Chlorobaculum parvum (strain DSM 263 / NCIMB 8327) (Chlorobium vibrioforme subsp. thiosulfatophilum)).